The sequence spans 325 residues: NADH-quinone oxidoreductase subunit H (325 aa).

The next 8 membrane-spanning stretches (helical) occupy residues 11–31 (ILLTILKAVVILLVVVTCGAF), 81–101 (VIFTLAPMIAFTSLLLAFAIV), 114–134 (IGILFFLMMAGLAVYAVLFAG), 154–174 (LSYEVFLGLSLMGVVAQAGSF), 186–206 (VWNVIPQFFGFITFAIAGVAV), 237–257 (FFVGEYIGIVTISALMVTLFF), 265–285 (LPPFIWFALKTAFFMMMFILI), and 304–324 (ICLPLTLINLLVTAAVILWQA).

Belongs to the complex I subunit 1 family. As to quaternary structure, NDH-1 is composed of 13 different subunits. Subunits NuoA, H, J, K, L, M, N constitute the membrane sector of the complex.

It is found in the cell inner membrane. The catalysed reaction is a quinone + NADH + 5 H(+)(in) = a quinol + NAD(+) + 4 H(+)(out). In terms of biological role, NDH-1 shuttles electrons from NADH, via FMN and iron-sulfur (Fe-S) centers, to quinones in the respiratory chain. The immediate electron acceptor for the enzyme in this species is believed to be ubiquinone. Couples the redox reaction to proton translocation (for every two electrons transferred, four hydrogen ions are translocated across the cytoplasmic membrane), and thus conserves the redox energy in a proton gradient. This subunit may bind ubiquinone. The polypeptide is NADH-quinone oxidoreductase subunit H (Shigella flexneri serotype 5b (strain 8401)).